A 596-amino-acid chain; its full sequence is Probable ATP-dependent RNA helicase DDX52 (596 aa).

N6-acetyllysine is present on Lys15. Ser39 bears the Phosphoserine mark. The disordered stretch occupies residues 68 to 94 (LPDEEKTEESQIERKKQNRKKKKITSE). Positions 163-191 (QLDQEYKINSRLLQNILDAGFQTPTPIQM) match the Q motif motif. Positions 194 to 372 (IPVMLHGREL…RLNLDSVITV (179 aa)) constitute a Helicase ATP-binding domain. 207–214 (APTGSGKT) provides a ligand contact to ATP. The short motif at 316 to 319 (DESD) is the DEAD box element. The region spanning 383–544 (TVEQELLFVG…PVPEYIKGFQ (162 aa)) is the Helicase C-terminal domain. The interval 575-596 (AKDKRKKVTGQNKKKVAPEDKS) is disordered. Basic residues predominate over residues 577–589 (DKRKKVTGQNKKK).

Belongs to the DEAD box helicase family. DDX52/ROK1 subfamily.

It is found in the nucleus. The protein resides in the nucleolus. The catalysed reaction is ATP + H2O = ADP + phosphate + H(+). This chain is Probable ATP-dependent RNA helicase DDX52 (DDX52), found in Bos taurus (Bovine).